A 697-amino-acid chain; its full sequence is Glycine--tRNA ligase beta subunit (697 aa).

It belongs to the class-II aminoacyl-tRNA synthetase family. In terms of assembly, tetramer of two alpha and two beta subunits.

It is found in the cytoplasm. The catalysed reaction is tRNA(Gly) + glycine + ATP = glycyl-tRNA(Gly) + AMP + diphosphate. This is Glycine--tRNA ligase beta subunit from Ralstonia nicotianae (strain ATCC BAA-1114 / GMI1000) (Ralstonia solanacearum).